Here is a 339-residue protein sequence, read N- to C-terminus: UDP-galactose transporter homolog 1 (339 aa).

Topologically, residues 1-4 (MAGS) are lumenal. A helical membrane pass occupies residues 5–25 (TSSLVICAIGIYATFLTWALV). At 26–42 (QEPLATRTWPNSMGKFQ) the chain is on the cytoplasmic side. Residues 43 to 63 (FPNVISLIQASVAMMMGYLYL) traverse the membrane as a helical segment. Residues 64–106 (NWKKVEYPPRKMIKDHWKQLMLISFTQSSSGPLATTSLKHVDY) are Lumenal-facing. A helical transmembrane segment spans residues 107 to 127 (LTYMLAKSCKMIPVLLVHLLL). Residues 128–136 (YRTPIASQK) are Cytoplasmic-facing. The helical transmembrane segment at 137-157 (KVVALLVSLGVTIFTIGGNDG) threads the bilayer. At 158–174 (KKLKRSFNESGNDNKLQ) the chain is on the lumenal side. Asparagine 165 is a glycosylation site (N-linked (GlcNAc...) asparagine). The helical transmembrane segment at 175–192 (GFGLLFSSLFLDGLTNAT) threads the bilayer. At 193 to 214 (QDKLLKANKAKEKGKQTLITGA) the chain is on the cytoplasmic side. The chain crosses the membrane as a helical span at residues 215–235 (HLMFTLNLFVILWNILYFIVI). Over 236–245 (DCKQWDNAVS) the chain is Lumenal. Residues 246–266 (VLTMDPQVWGYLMLYSFCGAM) traverse the membrane as a helical segment. Topologically, residues 267–280 (GQCFIFYTLEQFGS) are cytoplasmic. The chain crosses the membrane as a helical span at residues 281–303 (LVLIMITVTRKMVSMILSIIVFG). The Lumenal portion of the chain corresponds to 304-307 (KSVR). The chain crosses the membrane as a helical span at residues 308-327 (FQQWVGMFIVFGGITWEALN). At 328-339 (KKKANIPKAKSA) the chain is on the cytoplasmic side.

This sequence belongs to the nucleotide-sugar transporter family. SLC35B subfamily.

It localises to the endoplasmic reticulum membrane. Its function is as follows. May be involved in specific transport of UDP-Gal from the cytosol to the Golgi lumen. Involved in the maintenance of optimal conditions for the folding of secretory pathway proteins in the endoplasmic reticulum. Overexpression confers resistance to the immunosuppressive drug, leflunomide. In Saccharomyces cerevisiae (strain ATCC 204508 / S288c) (Baker's yeast), this protein is UDP-galactose transporter homolog 1 (HUT1).